The following is a 311-amino-acid chain: MVNPLYHKHIISINDLCREELELVLRTAASLKSHPQPELLKHKVIASCFFEASTRTRLSFETSIHRLGASVVGFSDSSNTSLGKKGETLADTMSVISTYVDAIVMRHPQEGAARLATQFSGNVPVVNAGDGANQHPTQTLLDLFTIQETQGRLDNINIAMVGDLKYGRTVHSLTQALAKFNGNRFFFIAPDALAMPAYLLEMLAEKGIEYSLHESIEEVVPELDILYMTRVQKERLDPSEYANVKAQFVLRAADLNGAQDNLKVLHPLPRIDEITTDVDKTPYAYYFQQAGNGIFARQALLALVLNAELAL.

Residues Arg-55 and Thr-56 each contribute to the carbamoyl phosphate site. Lys-85 serves as a coordination point for L-aspartate. 3 residues coordinate carbamoyl phosphate: Arg-106, His-135, and Gln-138. Positions 168 and 230 each coordinate L-aspartate. Residues Leu-268 and Pro-269 each contribute to the carbamoyl phosphate site.

It belongs to the aspartate/ornithine carbamoyltransferase superfamily. ATCase family. Heterododecamer (2C3:3R2) of six catalytic PyrB chains organized as two trimers (C3), and six regulatory PyrI chains organized as three dimers (R2).

It carries out the reaction carbamoyl phosphate + L-aspartate = N-carbamoyl-L-aspartate + phosphate + H(+). The protein operates within pyrimidine metabolism; UMP biosynthesis via de novo pathway; (S)-dihydroorotate from bicarbonate: step 2/3. Functionally, catalyzes the condensation of carbamoyl phosphate and aspartate to form carbamoyl aspartate and inorganic phosphate, the committed step in the de novo pyrimidine nucleotide biosynthesis pathway. This is Aspartate carbamoyltransferase catalytic subunit from Yersinia enterocolitica serotype O:8 / biotype 1B (strain NCTC 13174 / 8081).